Here is a 619-residue protein sequence, read N- to C-terminus: Pentatricopeptide repeat-containing protein At1g68980, mitochondrial (619 aa).

Residues 1–100 (MLRKTLTLIS…RAFVSTTYVI (100 aa)) constitute a mitochondrion transit peptide. PPR repeat units follow at residues 186-221 (DLVASNAALEACCRQMESLADAENLIESMDVLGVKP), 222-256 (DELSFGFLAYLYARKGLREKISELEDLMDGLGFAS), 257-292 (RRILYSSMISGYVKSGDLDSASDVILCSLKGVGEAS), 295-329 (SEETYCELVRGFIESKSVESLAKLIIEAQKLESMS), 366-400 (GIGVYVPILKAYCKEGRTSEATQLVTEISSSGLQL), 401-435 (DVETYNTMIEASMTKHDFLSALTLFRDMRETRVAD), 436-466 (LKRCYLTIMTGLLENQRPELMAEFVEEVMED), 472-506 (KSHDWNSIIHAFCKSGRLGDAKSTFRRMTFLQYEP), 507-541 (NNQTYLSLINGYVSCEKYFEVVVIWKEFKDKKAKL), and 542-576 (EHALADAFLNALVKGGFFGTALQVIEKCQEMKIFV).

Belongs to the PPR family. P subfamily.

It localises to the mitochondrion. The protein is Pentatricopeptide repeat-containing protein At1g68980, mitochondrial of Arabidopsis thaliana (Mouse-ear cress).